Consider the following 199-residue polypeptide: Glycerol-3-phosphate acyltransferase (199 aa).

5 helical membrane-spanning segments follow: residues 4–24 (LVSV…FLMG), 51–71 (WAAL…AYLG), 77–97 (EWGF…PVWL), 111–131 (VMLL…ALAV), and 152–172 (LFLL…AVVI).

This sequence belongs to the PlsY family. In terms of assembly, probably interacts with PlsX.

Its subcellular location is the cell membrane. The catalysed reaction is an acyl phosphate + sn-glycerol 3-phosphate = a 1-acyl-sn-glycero-3-phosphate + phosphate. It functions in the pathway lipid metabolism; phospholipid metabolism. Its function is as follows. Catalyzes the transfer of an acyl group from acyl-phosphate (acyl-PO(4)) to glycerol-3-phosphate (G3P) to form lysophosphatidic acid (LPA). This enzyme utilizes acyl-phosphate as fatty acyl donor, but not acyl-CoA or acyl-ACP. The sequence is that of Glycerol-3-phosphate acyltransferase from Symbiobacterium thermophilum (strain DSM 24528 / JCM 14929 / IAM 14863 / T).